The primary structure comprises 107 residues: Thiosulfate sulfurtransferase GlpE (107 aa).

In terms of domain architecture, Rhodanese spans 17-101 (AAGAARLVDI…GFEAWRREFP (85 aa)). Cys65 functions as the Cysteine persulfide intermediate in the catalytic mechanism.

Belongs to the GlpE family.

It is found in the cytoplasm. The enzyme catalyses thiosulfate + hydrogen cyanide = thiocyanate + sulfite + 2 H(+). It catalyses the reaction thiosulfate + [thioredoxin]-dithiol = [thioredoxin]-disulfide + hydrogen sulfide + sulfite + 2 H(+). In terms of biological role, transferase that catalyzes the transfer of sulfur from thiosulfate to thiophilic acceptors such as cyanide or dithiols. May function in a CysM-independent thiosulfate assimilation pathway by catalyzing the conversion of thiosulfate to sulfite, which can then be used for L-cysteine biosynthesis. This chain is Thiosulfate sulfurtransferase GlpE, found in Aeromonas hydrophila subsp. hydrophila (strain ATCC 7966 / DSM 30187 / BCRC 13018 / CCUG 14551 / JCM 1027 / KCTC 2358 / NCIMB 9240 / NCTC 8049).